The following is a 438-amino-acid chain: Zinc finger protein 641 (438 aa).

The disordered stretch occupies residues 1-53 (MQAEDRSQFGSAAEMLSEQTAALGTGWESMNVQLDGAEPQVERGSQEERPWRT). Over residues 17–32 (SEQTAALGTGWESMNV) the composition is skewed to polar residues. Over residues 40-51 (QVERGSQEERPW) the composition is skewed to basic and acidic residues. The KRAB domain maps to 109–181 (VTIKDVSLCF…DPQDLEERDI (73 aa)). The interval 171–265 (PDPQDLEERD…EMDSLLRPHT (95 aa)) is transactivation. Residue S191 is modified to Phosphoserine. 3 consecutive C2H2-type zinc fingers follow at residues 264–286 (HTCPQCGKQFVWGSHLARHQQTH), 292–314 (YSCLKCEKTFGRRHHLIRHQKTH), and 320–342 (SRCSECGKNFRCNSHLASHQRVH). Residues 345 to 367 (GKSCKGQEVGESPGTRKRQRAPP) form a disordered region. 2 consecutive C2H2-type zinc fingers follow at residues 372–394 (HVCTECGKSFGRRHHLVRHWLTH) and 400–422 (FQCPRCEKSFGRKHHLDRHLLTH). Residues 418–438 (HLLTHQGQSPRNSWDRGTSVF) form a disordered region. Residues 422–438 (HQGQSPRNSWDRGTSVF) are compositionally biased toward polar residues. The residue at position 426 (S426) is a Phosphoserine.

This sequence belongs to the krueppel C2H2-type zinc-finger protein family. Highly expressed in skeletal muscle, moderate expression in heart, liver, and pancreas, lower expression in placenta, no expression seen in brain, lung, and kidney.

The protein localises to the nucleus. Transcriptional activator. Activates transcriptional activities of SRE and AP-1. The chain is Zinc finger protein 641 (ZNF641) from Homo sapiens (Human).